An 82-amino-acid chain; its full sequence is Small ribosomal subunit protein bS16 (82 aa).

The protein belongs to the bacterial ribosomal protein bS16 family.

This is Small ribosomal subunit protein bS16 from Acidobacterium capsulatum (strain ATCC 51196 / DSM 11244 / BCRC 80197 / JCM 7670 / NBRC 15755 / NCIMB 13165 / 161).